Reading from the N-terminus, the 517-residue chain is Squalene epoxidase 6 (517 aa).

2 helical membrane-spanning segments follow: residues 3-23 (FTHVCLWTLVAFVLTWTVFYL) and 45-65 (AADVIIVGAGVGGSALAYALA). FAD-binding positions include 55 to 56 (VG), 75 to 76 (ER), Arg83, Phe88, Arg156, Val172, Asp336, and Met349. The helical transmembrane segment at 447–467 (LVYHLCAITLSSIGQLLSPFP) threads the bilayer.

This sequence belongs to the squalene monooxygenase family. The cofactor is FAD. Expressed in seedlings, leaves, stems, inflorescences and siliques.

The protein resides in the membrane. The enzyme catalyses squalene + reduced [NADPH--hemoprotein reductase] + O2 = (S)-2,3-epoxysqualene + oxidized [NADPH--hemoprotein reductase] + H2O + H(+). It functions in the pathway terpene metabolism; lanosterol biosynthesis; lanosterol from farnesyl diphosphate: step 2/3. In terms of biological role, catalyzes the stereospecific oxidation of squalene to (S)-2,3-epoxysqualene, and is considered to be a rate-limiting enzyme in steroid biosynthesis. This chain is Squalene epoxidase 6 (SQE6), found in Arabidopsis thaliana (Mouse-ear cress).